Consider the following 248-residue polypeptide: Triosephosphate isomerase (248 aa).

2 residues coordinate D-glyceraldehyde 3-phosphate: N10 and K12. H95 (electrophile) is an active-site residue. E165 functions as the Proton acceptor in the catalytic mechanism. D-glyceraldehyde 3-phosphate-binding positions include G171, L230, and 232–233 (GN).

This sequence belongs to the triosephosphate isomerase family. As to quaternary structure, homodimer.

It catalyses the reaction D-glyceraldehyde 3-phosphate = dihydroxyacetone phosphate. Its pathway is carbohydrate biosynthesis; gluconeogenesis. The protein operates within carbohydrate degradation; glycolysis; D-glyceraldehyde 3-phosphate from glycerone phosphate: step 1/1. Its function is as follows. Catalyzes the interconversion of glyceraldehyde 3-phosphate and dihydroxyacetone phosphate in the glycolytic and gluconeogenic pathways. The chain is Triosephosphate isomerase from Plasmodium falciparum (isolate 3D7).